Reading from the N-terminus, the 572-residue chain is Sialate:O-sulfotransferase 1 (572 aa).

Over 1-14 the chain is Cytoplasmic; that stretch reads MAKPFFRLQKFLRR. Residues 15 to 35 traverse the membrane as a helical; Signal-anchor for type II membrane protein segment; it reads TQFLLLFLTAAYLMTGSLLLL. The Extracellular portion of the chain corresponds to 36 to 572; that stretch reads QRARVALPQA…AGLPREYVPR (537 aa). Residue Asn105 is glycosylated (N-linked (GlcNAc...) asparagine). Residues 116–135 form a disordered region; that stretch reads HLTSDPQGPPTLGPEASGPA. WSC domains follow at residues 139–231 and 242–337; these read QGNY…YSVG and TATY…DTRC. N-linked (GlcNAc...) asparagine glycans are attached at residues Asn254 and Asn345.

Belongs to the WSCD family.

The protein localises to the golgi apparatus membrane. The enzyme catalyses a ganglioside GM1b + 3'-phosphoadenylyl sulfate = an 8-O-sulfo-ganglioside GM1b + adenosine 3',5'-bisphosphate + H(+). Its function is as follows. Sialate:O-sulfotransferase which catalyzes 8-O-sulfation at the Sia-glycan level using 3'-phosphoadenosine 5'-phosphosulfate (PAPS) as a donor, forming 8-O-sulfated Sia (Sia8S)-glycans. Displays selectivity toward glycolipids such as GM1 gangliosides. This chain is Sialate:O-sulfotransferase 1 (Wscd1), found in Rattus norvegicus (Rat).